The sequence spans 891 residues: DNA mismatch repair protein MutS (891 aa).

ATP is bound at residue 639 to 646 (GPNMAGKS). The disordered stretch occupies residues 827–854 (TIQEARPSAQGSEEKTPSSPAEKGLSLF).

Belongs to the DNA mismatch repair MutS family.

Its function is as follows. This protein is involved in the repair of mismatches in DNA. It is possible that it carries out the mismatch recognition step. This protein has a weak ATPase activity. In Treponema denticola (strain ATCC 35405 / DSM 14222 / CIP 103919 / JCM 8153 / KCTC 15104), this protein is DNA mismatch repair protein MutS.